The primary structure comprises 243 residues: Large ribosomal subunit protein uL2 (243 aa).

Basic residues predominate over residues 1-12; the sequence is MGRRIQGQRRGR. 2 disordered regions span residues 1-38 and 198-243; these read MGRR…SDDT and VDHP…GSSE. Basic and acidic residues-rich tracts occupy residues 24–34 and 221–231; these read YKAELSHKQSE and PPGRKVGDIAS.

The protein belongs to the universal ribosomal protein uL2 family. Part of the 50S ribosomal subunit. Forms a bridge to the 30S subunit in the 70S ribosome.

In terms of biological role, one of the primary rRNA binding proteins. Required for association of the 30S and 50S subunits to form the 70S ribosome, for tRNA binding and peptide bond formation. It has been suggested to have peptidyltransferase activity; this is somewhat controversial. Makes several contacts with the 16S rRNA in the 70S ribosome. The sequence is that of Large ribosomal subunit protein uL2 from Haloquadratum walsbyi (strain DSM 16790 / HBSQ001).